The following is a 199-amino-acid chain: Recombination protein RecR (199 aa).

The C4-type zinc-finger motif lies at 57–72 (CSICGNITEDDPCDIC). In terms of domain architecture, Toprim spans 80-176 (KAVLVVEDSK…KVTRLAHGLS (97 aa)).

The protein belongs to the RecR family.

Functionally, may play a role in DNA repair. It seems to be involved in an RecBC-independent recombinational process of DNA repair. It may act with RecF and RecO. This Pediococcus pentosaceus (strain ATCC 25745 / CCUG 21536 / LMG 10740 / 183-1w) protein is Recombination protein RecR.